Consider the following 926-residue polypeptide: Storkhead-box protein 2 (926 aa).

Disordered stretches follow at residues 1 to 32 (MKKT…RSEK), 338 to 394 (EEEK…IPGG), 452 to 529 (EMPF…SYVD), 632 to 693 (GVKK…SLDK), 724 to 803 (LKSH…GTMQ), and 825 to 926 (LAPK…VTSV). Basic and acidic residues predominate over residues 18 to 32 (FSDRASDRMRSRSEK). Over residues 353–378 (HSGRSKKSRTHRKSHGKSRSHSKTRV) the composition is skewed to basic residues. The span at 379-394 (SKGDPSDGSHLDIPGG) shows a compositional bias: basic and acidic residues. Basic residues predominate over residues 463 to 472 (SHSKVHRSHS). Over residues 473 to 495 (HTQDRRSRNERSNKAKERSRSMD) the composition is skewed to basic and acidic residues. The span at 518–529 (QDDQTPSQSYVD) shows a compositional bias: polar residues. 2 stretches are compositionally biased toward basic and acidic residues: residues 632–658 (GVKK…EESP) and 684–693 (HGAEPSSLDK). Positions 746-772 (LGTSAAQATPASQRQQESGGNQETSFD) are enriched in polar residues. Over residues 785 to 799 (GANKNTEEEKNREDV) the composition is skewed to basic and acidic residues. Polar residues-rich tracts occupy residues 847 to 884 (MDSS…QNPA) and 914 to 926 (KPSN…VTSV).

The polypeptide is Storkhead-box protein 2 (STOX2) (Macaca fascicularis (Crab-eating macaque)).